The sequence spans 103 residues: Alpha-ketoglutarate dehydrogenase component 4 (103 aa).

Position 1 is an N-acetylmethionine (methionine 1). Position 5 is an N6-succinyllysine (lysine 5). The interval 23 to 70 is disordered; it reads IRFPDRRDNPKPNVSEVLRSAGLPSHTSSISQHSKGSKSPDWLMHQGP. Residues 47–61 show a composition bias toward low complexity; that stretch reads SHTSSISQHSKGSKS. Residues serine 61 and serine 90 each carry the phosphoserine modification.

This sequence belongs to the alpha-ketoglutarate dehydrogenase component 4 family. Component of the 2-oxoglutarate dehydrogenase complex (OGDHC), composed of OGDH (2-oxoglutarate dehydrogenase; also called E1 subunit), DLST (dihydrolipoamide succinyltransferase; also called E2 subunit) and DLD (dihydrolipoamide dehydrogenase; also called E3 subunit), and the assembly factor KGD4. Within OGDHC complex, interacts (via N-terminus) with E3 subunit and (via C-terminus) with E2 subunit.

It localises to the mitochondrion. Its function is as follows. Molecular adapter that is necessary to form a stable 2-oxoglutarate dehydrogenase enzyme complex (OGDHC). Enables the specific recruitment of E3 subunit to E2 subunit in the 2-oxoglutarate dehydrogenase complex (OGDHC). In Bos taurus (Bovine), this protein is Alpha-ketoglutarate dehydrogenase component 4 (KGD4).